The following is a 246-amino-acid chain: Probable transcriptional regulatory protein SPO1072 (246 aa).

Residues 1-22 form a disordered region; that stretch reads MAGHSKWANIQHRKGRQDAARS.

The protein belongs to the TACO1 family.

It is found in the cytoplasm. In Ruegeria pomeroyi (strain ATCC 700808 / DSM 15171 / DSS-3) (Silicibacter pomeroyi), this protein is Probable transcriptional regulatory protein SPO1072.